Consider the following 192-residue polypeptide: Probable cobalt-precorrin-6B C(15)-methyltransferase (decarboxylating) (192 aa).

Residues threonine 20, 44–48 (GSGTG), glutamate 68, and alanine 96 contribute to the S-adenosyl-L-methionine site.

This sequence belongs to the methyltransferase superfamily. Archaeal-type CbiT family.

The enzyme catalyses Co-precorrin-6B + S-adenosyl-L-methionine = Co-precorrin-7 + S-adenosyl-L-homocysteine + CO2. Its pathway is cofactor biosynthesis; adenosylcobalamin biosynthesis; cob(II)yrinate a,c-diamide from sirohydrochlorin (anaerobic route): step 8/10. In terms of biological role, catalyzes the methylation of C-15 in cobalt-precorrin-6B followed by the decarboxylation of C-12 to form cobalt-precorrin-7. The polypeptide is Probable cobalt-precorrin-6B C(15)-methyltransferase (decarboxylating) (Sulfolobus acidocaldarius (strain ATCC 33909 / DSM 639 / JCM 8929 / NBRC 15157 / NCIMB 11770)).